We begin with the raw amino-acid sequence, 153 residues long: Actin-related protein 2/3 complex subunit 5-like protein (153 aa).

At Ser64 the chain carries Phosphoserine.

The protein belongs to the ARPC5 family. May be a component of the Arp2/3 complex in which it may replace ARPC5.

It localises to the cytoplasm. The protein localises to the cytoskeleton. It is found in the cell projection. May function as component of the Arp2/3 complex which is involved in regulation of actin polymerization and together with an activating nucleation-promoting factor (NPF) mediates the formation of branched actin networks. In Bos taurus (Bovine), this protein is Actin-related protein 2/3 complex subunit 5-like protein (ARPC5L).